The primary structure comprises 450 residues: 23S rRNA (uracil(1939)-C(5))-methyltransferase RlmD (450 aa).

Positions 1–22 (MARNKGGLRFQPSGGARGPAIP) are disordered. Residues 20–78 (AIPVGKKQRLTIERLAHDGRGIAHEAGMTWFVSGGLPGEELEARVLGARSKVVDARSER) form the TRAM domain. Positions 91, 97, 100, and 179 each coordinate [4Fe-4S] cluster. Residues glutamine 283, phenylalanine 312, asparagine 317, glutamate 333, aspartate 360, and aspartate 381 each coordinate S-adenosyl-L-methionine. Cysteine 407 (nucleophile) is an active-site residue.

Belongs to the class I-like SAM-binding methyltransferase superfamily. RNA M5U methyltransferase family. RlmD subfamily.

The enzyme catalyses uridine(1939) in 23S rRNA + S-adenosyl-L-methionine = 5-methyluridine(1939) in 23S rRNA + S-adenosyl-L-homocysteine + H(+). In terms of biological role, catalyzes the formation of 5-methyl-uridine at position 1939 (m5U1939) in 23S rRNA. This Pseudomonas aeruginosa (strain UCBPP-PA14) protein is 23S rRNA (uracil(1939)-C(5))-methyltransferase RlmD.